A 1287-amino-acid polypeptide reads, in one-letter code: MTIPDPANIIHNDAGTASPHHIWADVGDSTSSSQHEATRSRSDDANGGASASMHAPQHVKANRAAQPTYDSSDLPSFGLSARLTRDSSSFGSKPSSSASDSRRPKFAPYEAENLWATSSTTSHPSKASQSTLSPNASVFKPSRSLQPNHFEPHAVANVHDFDDPLNSAYSSDTVSPRPDHAPLDHEQPQQPSALDPVAVSKVEEQRGDHSIPHQNGLVSAQAQTASDAVSTSKYTTEAADQEEDQDDFVYPGADSPSSGQAAVQDEQQAVTDSQTTKSLTKQESDPEASSTSLSAPAEAEHIVVGSAAEQSLTSSAPAETAVHIDYDTLAQLCSRGPLSDLQSFFHTAQESGLSMFSLSNDPNPGNGLVPLHFAAKDGKTDIVRWLITQAGAIVEMEDREGETALHKAAMAGKLSVASLLLSHGADANAQDADGWTALHNACSRGYLDLVRLLVDRGHAQIDVQGGRGAWTPLMNAASKGHLPVVRHLTAKYHADPFVRNAAGETAFDVAAATFEVYICEILERYEAERWNASKFTTSSPSRSGAIVPGRGPYEPLALHTTIPVILHENQRLDTRLQTLALNGGKPRWSSSSAARAHKPDRRSPSSMPPGPLAPSRTRHVPMRQDDVGLPTRSLPYKLRLRSRVGPAAARRRAAALAAQHTPNPQDCHDDDLASTPTPESVLQARRGTSSVNGASAQHADAESSHFWLCEWQLDTTHPLVDVEHGWQYAQSFDALDDKWSSQPPPPLERLLEGRGLSASVTRAITGGAGFANAQAEQEISSSSWVRRRRWIRVLRRRLDIEFGDDLEACEGATGAGAEHLVLSSESQSNGDGSHGLSTAAIMAAQEAAKSECSQLGPDADYVSRAKALAGPSAASGATPADAMGADRDELARRIARLVMANTELRAAFEDDDVERRSRAEELRKEYALQLGQLREAAGLDEDEDEDAADDDDDEFIYPNSYKDDGASVFTRLVNGETSGTLSRPSLSQRQSSAASMLRNSVAPSEAGTSLAAARSADLAANREFRVPTNEAPNKVVLRHGPTMREQNLQPQWQRDEEAKDCIGCGRHFTFFLRKHHCRRCGRIFCDACSSKRAQLRMAELVVDPSLPSMAASEVLAPTRVCNGCHAELQLPPQLQNMRGADAMMAASRSRGADEVSGRSILETQLEDGAFRSTLAPPSDVSSRASELTECPVCSTTLSALGGSEEQEAHVRNCLENGGGGSMQGGRYLVYKLPEDSPIVGKECSICMEDFVANSTIARLPCLCYFHRGCIDSWFKRGRECPVHARDW.

Residues 1 to 298 (MTIPDPANII…SSTSLSAPAE (298 aa)) form a disordered region. Residues 86-99 (DSSSFGSKPSSSAS) are compositionally biased toward low complexity. The span at 115–136 (WATSSTTSHPSKASQSTLSPNA) shows a compositional bias: polar residues. Positions 128-144 (SQSTLSPNASVFKPSRS) match the PAM2 motif. 2 stretches are compositionally biased toward basic and acidic residues: residues 177 to 187 (RPDHAPLDHEQ) and 201 to 211 (KVEEQRGDHSI). Polar residues predominate over residues 212–235 (PHQNGLVSAQAQTASDAVSTSKYT). The short motif at 239 to 253 (ADQEEDQDDFVYPGA) is the PAM2L 1 element. Residues 255-294 (SPSSGQAAVQDEQQAVTDSQTTKSLTKQESDPEASSTSLS) are compositionally biased toward polar residues. 4 ANK repeats span residues 366 to 395 (NGLV…AIVE), 400 to 429 (EGET…DANA), 433 to 463 (DGWT…QIDV), and 468 to 497 (GAWT…ADPF). Disordered stretches follow at residues 582-630 (NGGK…VGLP), 643-697 (RVGP…ASAQ), 934-960 (REAA…YPNS), and 977-1005 (TSGT…APSE). Positions 674–695 (STPTPESVLQARRGTSSVNGAS) are enriched in polar residues. Over residues 938-955 (GLDEDEDEDAADDDDDEF) the composition is skewed to acidic residues. The short motif at 941 to 960 (EDEDEDAADDDDDEFIYPNS) is the PAM2L 2 element. The span at 981-995 (LSRPSLSQRQSSAAS) shows a compositional bias: low complexity. The segment at 1055-1129 (DEEAKDCIGC…VCNGCHAELQ (75 aa)) adopts an FYVE-type zinc-finger fold. Zn(2+)-binding residues include C1061, C1064, C1077, C1080, C1085, C1088, C1121, and C1124. An RING-type; atypical zinc finger spans residues 1243-1283 (CSICMEDFVANSTIARLPCLCYFHRGCIDSWFKRGRECPVH).

It belongs to the UPA1 PAM2 domain-binding protein family. As to quaternary structure, part of large ribonucleoprotein complexes (mRNPs) containing RNA-binding proteins RRM4 and PAB1, endosome-binding protein UPA1, core scaffold protein UPA2 and associated factor GRP1. Interacts (via PAM2 motif) with PAB1 (via PABC domain). Interacts (via PAM2L motifs) with RRM4.

Its subcellular location is the cytoplasm. The protein localises to the cytoskeleton. It is found in the endosome. FYVE zinc finger domain protein that functions in endosomal targeting and transport of mRNAs, as well as associated ribosomes. The endosomal mRNA transport regulates polarity of the infectious hyphae by transporting a broad spectrum of cargo mRNAs from the nucleus to cell poles. Involved in chitinase CTS1 secretion. Dispensable for general endosomal functions but crucial for endosomal recruitment of RRM4. This is FYVE zinc finger domain protein UPA1 from Mycosarcoma maydis (Corn smut fungus).